We begin with the raw amino-acid sequence, 94 residues long: Small ribosomal subunit protein uS19 (94 aa).

The protein belongs to the universal ribosomal protein uS19 family.

Its function is as follows. Protein S19 forms a complex with S13 that binds strongly to the 16S ribosomal RNA. In Elusimicrobium minutum (strain Pei191), this protein is Small ribosomal subunit protein uS19.